The following is a 241-amino-acid chain: MFFNSLLTNFAALEVGQHLYWQIGNIRLHGQVFLTSWILLGALLVFISFGTKKMENDPKGLQNLLEFLWDYIRDLARTQIGEKVYRDWMPFIGTLFLFVFVSNWGGALIPWRLIKLPSGELGAPTADINTTIALALLVSLSYFYAGLSNKGWRYFEYYVHPTPIMLPFKILEDFTKPLSLSFRLFGNILADELVVGVLVFLVPLILPIPVMFLGLFTSAIQALIFATLAAYYIGEAVEEHH.

The next 5 membrane-spanning stretches (helical) occupy residues 30 to 50 (GQVF…ISFG), 91 to 111 (FIGT…LIPW), 128 to 148 (INTT…AGLS), 193 to 213 (LVVG…VMFL), and 214 to 234 (GLFT…YYIG).

It belongs to the ATPase A chain family. In terms of assembly, F-type ATPases have 2 components, CF(1) - the catalytic core - and CF(0) - the membrane proton channel. CF(1) has five subunits: alpha(3), beta(3), gamma(1), delta(1), epsilon(1). CF(0) has four main subunits: a, b, b' and c.

Its subcellular location is the cellular thylakoid membrane. Functionally, key component of the proton channel; it plays a direct role in the translocation of protons across the membrane. This Prochlorococcus marinus (strain AS9601) protein is ATP synthase subunit a.